Reading from the N-terminus, the 299-residue chain is Oxygen-dependent coproporphyrinogen-III oxidase (299 aa).

Serine 92 contacts substrate. Mn(2+)-binding residues include histidine 96 and histidine 106. Histidine 106 acts as the Proton donor in catalysis. A substrate-binding site is contributed by 108–110; the sequence is NVR. Mn(2+) is bound by residues histidine 145 and histidine 175. Residues 240-275 form an important for dimerization region; the sequence is YVEFNLVWDRGTLFGLQTGGRTESILMSMPPLVRWE. 258 to 260 serves as a coordination point for substrate; the sequence is GGR.

This sequence belongs to the aerobic coproporphyrinogen-III oxidase family. As to quaternary structure, homodimer. The cofactor is Mn(2+).

It localises to the cytoplasm. It catalyses the reaction coproporphyrinogen III + O2 + 2 H(+) = protoporphyrinogen IX + 2 CO2 + 2 H2O. It functions in the pathway porphyrin-containing compound metabolism; protoporphyrin-IX biosynthesis; protoporphyrinogen-IX from coproporphyrinogen-III (O2 route): step 1/1. Its function is as follows. Involved in the heme biosynthesis. Catalyzes the aerobic oxidative decarboxylation of propionate groups of rings A and B of coproporphyrinogen-III to yield the vinyl groups in protoporphyrinogen-IX. The protein is Oxygen-dependent coproporphyrinogen-III oxidase of Escherichia fergusonii (strain ATCC 35469 / DSM 13698 / CCUG 18766 / IAM 14443 / JCM 21226 / LMG 7866 / NBRC 102419 / NCTC 12128 / CDC 0568-73).